A 415-amino-acid polypeptide reads, in one-letter code: Hepatocyte nuclear factor 3-beta (415 aa).

Positions 150–244 (KPPYSYISLI…ENGCYLRRQK (95 aa)) form a DNA-binding region, fork-head. Residues 251-262 (KMSMKEPGRKGG) show a composition bias toward basic and acidic residues. The interval 251–324 (KMSMKEPGRK…GQHLMSQHHS (74 aa)) is disordered. Residues 266-277 (SANSSSDSCNGN) are compositionally biased toward low complexity. Polar residues predominate over residues 310 to 323 (SPVSQGQHLMSQHH).

It is found in the nucleus. In terms of biological role, transcription activator for a number of liver genes. Interacts with the cis-acting regulatory regions of these genes. This is Hepatocyte nuclear factor 3-beta (foxa2) from Oryzias latipes (Japanese rice fish).